The sequence spans 120 residues: Large ribosomal subunit protein uL22 (120 aa).

Positions 1-22 (MLVNRRYTAKGKNLPSSPKKVR) are disordered.

The protein belongs to the universal ribosomal protein uL22 family. Part of the 50S ribosomal subunit.

In terms of biological role, this protein binds specifically to 23S rRNA; its binding is stimulated by other ribosomal proteins, e.g. L4, L17, and L20. It is important during the early stages of 50S assembly. It makes multiple contacts with different domains of the 23S rRNA in the assembled 50S subunit and ribosome. The globular domain of the protein is located near the polypeptide exit tunnel on the outside of the subunit, while an extended beta-hairpin is found that lines the wall of the exit tunnel in the center of the 70S ribosome. This is Large ribosomal subunit protein uL22 from Borreliella burgdorferi (strain ATCC 35210 / DSM 4680 / CIP 102532 / B31) (Borrelia burgdorferi).